Reading from the N-terminus, the 227-residue chain is PKHD-type hydroxylase Bcen_3557 (227 aa).

The 101-residue stretch at 78-178 (KVFPPLFNRY…RVASFFWIQS (101 aa)) folds into the Fe2OG dioxygenase domain. The Fe cation site is built by His-96, Asp-98, and His-159. Arg-169 serves as a coordination point for 2-oxoglutarate.

The cofactor is Fe(2+). L-ascorbate serves as cofactor.

In Burkholderia orbicola (strain AU 1054), this protein is PKHD-type hydroxylase Bcen_3557.